The chain runs to 722 residues: Bifunctional UDP-N-acetylglucosamine 2-epimerase/N-acetylmannosamine kinase (722 aa).

5 residues coordinate UDP: arginine 19, serine 23, arginine 113, histidine 220, and asparagine 253. 4 residues coordinate CMP-N-acetyl-beta-neuraminate: lysine 259, glutamate 271, lysine 280, and histidine 281. Valine 282, serine 301, serine 302, glutamate 307, and arginine 321 together coordinate UDP. Residues 406-722 (TLSALAVDLG…VLDYTTRRIY (317 aa)) are N-acetylmannosamine kinase. Residue aspartate 413 coordinates Mg(2+). Glycine 416 is an an N-acyl-D-mannosamine 6-phosphate binding site. The ADP site is built by threonine 417, asparagine 418, and arginine 420. Positions 476, 477, 489, 516, 517, and 545 each coordinate an N-acyl-D-mannosamine 6-phosphate. Residues glycine 476, arginine 477, threonine 489, asparagine 516, and aspartate 517 each contribute to the an N-acyl-D-mannosamine site. Residue aspartate 517 is part of the active site. An N-acyl-D-mannosamine contacts are provided by glutamate 566 and histidine 569. Histidine 569 lines the an N-acyl-D-mannosamine 6-phosphate pocket. Zn(2+)-binding residues include histidine 569, cysteine 579, cysteine 581, and cysteine 586. Glutamate 588 is a binding site for an N-acyl-D-mannosamine 6-phosphate. Glutamate 588 contacts an N-acyl-D-mannosamine.

The protein in the N-terminal section; belongs to the UDP-N-acetylglucosamine 2-epimerase family. It in the C-terminal section; belongs to the ROK (NagC/XylR) family. As to quaternary structure, homodimer. Homotetramer. Homohexamer. The hexameric form exhibits both enzyme activities, whereas the dimeric form only catalyzes the phosphorylation of N-acyl-D-mannosamine. Phosphorylated. Phosphorylation by PKC activates the UDP-N-acetylglucosamine 2-epimerase activity. As to expression, highest expression in liver and placenta. Also found in heart, brain, lung, kidney, skeletal muscle and pancreas. Isoform 1 is expressed in heart, brain, kidney, liver, placenta, lung, spleen, pancreas, skeletal muscle and colon. Isoform 2 is expressed mainly in placenta, but also in brain, kidney, liver, lung, pancreas and colon. Isoform 3 is expressed at low level in kidney, liver, placenta and colon.

It localises to the cytoplasm. The protein resides in the cytosol. It carries out the reaction UDP-N-acetyl-alpha-D-glucosamine + H2O = aldehydo-N-acetyl-D-mannosamine + UDP + H(+). The catalysed reaction is an N-acyl-D-mannosamine + ATP = an N-acyl-D-mannosamine 6-phosphate + ADP + H(+). It functions in the pathway amino-sugar metabolism; N-acetylneuraminate biosynthesis. The UDP-N-acetylglucosamine 2-epimerase activity, in contrast to the N-acetylmannosamine kinase activity, exhibits allosteric regulation by cytidine monophosphate-N-acetylneuraminic acid (CMP-Neu5Ac), the end product of neuraminic acid biosynthesis. Moreover, the activity is contingent upon the oligomeric state of the enzyme. The monomeric form is inactive, while the dimeric form selectively catalyzes the phosphorylation of N-acetylmannosamine. The hexameric form, on the other hand, demonstrates full proficiency in both enzyme activities. Furthermore, the UDP-N-acetylglucosamine 2-epimerase activity is increased by PKC-mediated phosphorylation. Functionally, bifunctional enzyme that possesses both UDP-N-acetylglucosamine 2-epimerase and N-acetylmannosamine kinase activities, and serves as the initiator of the biosynthetic pathway leading to the production of N-acetylneuraminic acid (NeuAc), a critical precursor in the synthesis of sialic acids. By catalyzing this pivotal and rate-limiting step in sialic acid biosynthesis, this enzyme assumes a pivotal role in governing the regulation of cell surface sialylation, playing a role in embryonic angiogenesis. Sialic acids represent a category of negatively charged sugars that reside on the surface of cells as terminal components of glycoconjugates and mediate important functions in various cellular processes, including cell adhesion, signal transduction, and cellular recognition. The protein is Bifunctional UDP-N-acetylglucosamine 2-epimerase/N-acetylmannosamine kinase of Homo sapiens (Human).